The chain runs to 252 residues: Probable endonuclease 4 (252 aa).

Residues H56, H96, E129, D162, H165, H191, D204, H206, and E233 each coordinate Zn(2+).

It belongs to the AP endonuclease 2 family. Zn(2+) is required as a cofactor.

It carries out the reaction Endonucleolytic cleavage to 5'-phosphooligonucleotide end-products.. Endonuclease IV plays a role in DNA repair. It cleaves phosphodiester bonds at apurinic or apyrimidinic (AP) sites, generating a 3'-hydroxyl group and a 5'-terminal sugar phosphate. The sequence is that of Probable endonuclease 4 from Mycobacterium tuberculosis (strain ATCC 25177 / H37Ra).